Here is a 933-residue protein sequence, read N- to C-terminus: Progesterone receptor (933 aa).

An AF3; mediates transcriptional activation region spans residues 1-164 (MTELKAKGPR…PATQGVLSPL (164 aa)). The disordered stretch occupies residues 1-256 (MTELKAKGPR…AAAGGGAAAV (256 aa)). The tract at residues 1 to 566 (MTELKAKGPR…YSFESLPQKI (566 aa)) is modulating, Pro-Rich. Ser20 carries the post-translational modification Phosphoserine. The LXXL motif 1 motif lies at 55–59 (LDGLL). At Ser81 the chain carries Phosphoserine. The LXXL motif 2 signature appears at 115–119 (LDTLL). 2 positions are modified to phosphoserine: Ser130 and Ser162. A mediates transcriptional transrepression region spans residues 165–305 (MSRSGCKAGD…LATTMMDFIH (141 aa)). The Nuclear localization signal motif lies at 183-187 (KVLPR). Ser190 and Ser213 each carry phosphoserine. The segment covering 220-231 (EVEEEDGSESEE) has biased composition (acidic residues). A compositionally biased stretch (low complexity) spans 232 to 246 (SAGPLLKGKPRALGG). Ser294 is subject to Phosphoserine; by MAPK1. Over residues 335–356 (AXSAFAPPRSSPSASSTPVAVG) the composition is skewed to low complexity. The interval 335–378 (AXSAFAPPRSSPSASSTPVAVGDFPDCAYPPDAEPKDDAYPLYS) is disordered. Ser345 is subject to Phosphoserine; by MAPK. Lys388 participates in a covalent cross-link: Glycyl lysine isopeptide (Lys-Gly) (interchain with G-Cter in SUMO); alternate. Lys388 is covalently cross-linked (Glycyl lysine isopeptide (Lys-Gly) (interchain with G-Cter in ubiquitin); alternate). Residue Ser400 is modified to Phosphoserine; by CDK2. Positions 415–452 (PDFPLGPPPPLPPRAPPSRPGEAAVTAAPASASVSSAS) are disordered. Pro residues predominate over residues 418 to 433 (PLGPPPPLPPRAPPSR). Residues 434-452 (PGEAAVTAAPASASVSSAS) show a composition bias toward low complexity. Residues 456 to 546 (STLECILYKA…VYPPYLNYLR (91 aa)) form an AF1; mediates transcriptional activation region. Lys531 participates in a covalent cross-link: Glycyl lysine isopeptide (Lys-Gly) (interchain with G-Cter in SUMO). NR C4-type zinc fingers lie at residues 567-587 (CLIC…CGSC) and 603-627 (CAGR…LRKC). The nuclear receptor DNA-binding region spans 567–639 (CLICGDEASG…AGMVLGGRKF (73 aa)). Ser676 is subject to Phosphoserine. One can recognise an NR LBD domain in the interval 679–913 (QDIQLIPPLI…EFPEMMSEVI (235 aa)). The AF2; mediates transcriptional activation stretch occupies residues 687 to 933 (LINLLMSIEP…MVKPLLFHKK (247 aa)). Residue Arg766 participates in progesterone binding.

The protein belongs to the nuclear hormone receptor family. Interacts with SMARD1 and UNC45A. Interacts with CUEDC2; the interaction promotes ubiquitination, decreases sumoylation, and represses transcriptional activity. Interacts with PIAS3; the interaction promotes sumoylation of PR in a hormone-dependent manner, inhibits DNA-binding, and alters nuclear export. Interacts with SP1; the interaction requires ligand-induced phosphorylation on Ser-345 by ERK1/2-MAPK. Interacts with PRMT2. Interacts with NCOA2 and NCOA1. Interacts with KLF9. Interacts with GTF2B. In terms of processing, phosphorylated on multiple serine sites. Several of these sites are hormone-dependent. Phosphorylation on Ser-294 is highly hormone-dependent and modulates ubiquitination and sumoylation on Lys-388. Phosphorylation on Ser-102 and Ser-345 requires induction by hormone. Basal phosphorylation on Ser-81, Ser-162, Ser-190 and Ser-400 is increased in response to progesterone and can be phosphorylated in vitro by the CDK2-A1 complex. Increased levels of phosphorylation on Ser-400 also in the presence of EGF, heregulin, IGF, PMA and FBS. Phosphorylation at this site by CDK2 is ligand-independent, and increases nuclear translocation and transcriptional activity. Phosphorylation at Ser-162 and Ser-294, but not at Ser-190, is impaired during the G(2)/M phase of the cell cycle. Phosphorylation on Ser-345 by ERK1/2 MAPK is required for interaction with SP1. Post-translationally, sumoylation is hormone-dependent and represses transcriptional activity. Sumoylation on all three sites is enhanced by PIAS3. Desumoylated by SENP1. Sumoylation on Lys-388, the main site of sumoylation, is repressed by ubiquitination on the same site, and modulated by phosphorylation at Ser-294. Ubiquitination is hormone-dependent and represses sumoylation on the same site. Promoted by MAPK-mediated phosphorylation on Ser-294. Ubiquitinated by UBR5, leading to its degradation: UBR5 specifically recognizes and binds ligand-bound PGR when it is not associated with coactivators (NCOAs). In presence of NCOAs, the UBR5-degron is not accessible, preventing its ubiquitination and degradation. In terms of processing, palmitoylated by ZDHHC7 and ZDHHC21. Palmitoylation is required for plasma membrane targeting and for rapid intracellular signaling via ERK and AKT kinases and cAMP generation.

The protein resides in the nucleus. It localises to the cytoplasm. The steroid hormones and their receptors are involved in the regulation of eukaryotic gene expression and affect cellular proliferation and differentiation in target tissues. Transcriptional activator of several progesteron-dependent promoters in a variety of cell types. Involved in activation of SRC-dependent MAPK signaling on hormone stimulation. This chain is Progesterone receptor (PGR), found in Pan troglodytes (Chimpanzee).